The sequence spans 336 residues: Dihydroorotate dehydrogenase (quinone) (336 aa).

Residues 62–66 and Thr86 each bind FMN; that span reads AGLDK. Substrate is bound at residue Lys66. Residue 111-115 participates in substrate binding; sequence NRMGF. Asn139 and Asn172 together coordinate FMN. Asn172 is a binding site for substrate. Ser175 serves as the catalytic Nucleophile. Asn177 is a binding site for substrate. Positions 217 and 245 each coordinate FMN. Residue 246–247 participates in substrate binding; that stretch reads NT. FMN contacts are provided by residues Gly268, Gly297, and 318–319; that span reads YS.

The protein belongs to the dihydroorotate dehydrogenase family. Type 2 subfamily. Monomer. FMN serves as cofactor.

The protein localises to the cell membrane. It carries out the reaction (S)-dihydroorotate + a quinone = orotate + a quinol. Its pathway is pyrimidine metabolism; UMP biosynthesis via de novo pathway; orotate from (S)-dihydroorotate (quinone route): step 1/1. Its function is as follows. Catalyzes the conversion of dihydroorotate to orotate with quinone as electron acceptor. The sequence is that of Dihydroorotate dehydrogenase (quinone) from Salmonella arizonae (strain ATCC BAA-731 / CDC346-86 / RSK2980).